The chain runs to 61 residues: Small ribosomal subunit protein uS14 (61 aa).

4 residues coordinate Zn(2+): C24, C27, C40, and C43.

The protein belongs to the universal ribosomal protein uS14 family. Zinc-binding uS14 subfamily. Part of the 30S ribosomal subunit. Contacts proteins S3 and S10. Requires Zn(2+) as cofactor.

In terms of biological role, binds 16S rRNA, required for the assembly of 30S particles and may also be responsible for determining the conformation of the 16S rRNA at the A site. This is Small ribosomal subunit protein uS14 from Pelobacter propionicus (strain DSM 2379 / NBRC 103807 / OttBd1).